Reading from the N-terminus, the 762-residue chain is MSTFVNDTVEDAIKTPELDQPFEALGLKDDEYARIKEILGRRPTDAELTVYSVMWSEHCSYKSSKVHLRYFGETTTEEMASKILAGIGENAGVVDIGDGNAVTFRVESHNHPSFVEPHQGAATGVGGIVRDIMAMGARPIAVMDQLRFGALDNPDTQRVLPGVVDGISHYGNCLGLPNIGGETVFDDSYAGNPLVNALCVGTLKVEDLKLAFASGTGNKVILFGSRTGLDGIGGVSVLGSASFEEGEERKLPAVQVGDPFAEKVLIECCLELYKAGVVVGIQDLGGGGLACATSELAAAGDGGMRVNLDNVPLRAENMSAAEILASESQERMCAVVTPENVERFLEICAKWDVTCAEIGEVTDEKDRYVVVHNGEVVIDAPPSTIDEGPVYNRPVARPENQDELQLEGEIARPVDVEEIKAAWLKLVASPALASRAFITEQYDRYVRGNTVQAKNANAGVLRIDEETNRGVAISADASGRYTKLEPNTGAQLALAEAYRNVVSTGARPVAVTNCLNFGSPENAGVMWQFKEAVHGLADGSKLLGIPVSGGNVSFYNQTGDEPILPTPVVGVLGVLDNVEQSIGNVLPSEDNDLYLLGETFDEFGGSIWQQVSGAGLNGLPPVVDLLNEQRLADLFVGSDLFAASHDLSEGGLGQTLAELAIHADKGMDVDLSQIHPSLFTSLFAESASRIVVATNRGEELEKRAAELGVPVFKLGCTNDSAVIAVKGADVEFTVSVEELREAWTNTLPEAFGHAVGANAVVA.

Residue His58 is part of the active site. ATP is bound by residues Tyr61 and Arg105. Glu107 serves as a coordination point for Mg(2+). Substrate-binding positions include 108 to 111 and Arg130; that span reads SHNH. Catalysis depends on His109, which acts as the Proton acceptor. Asp131 is a Mg(2+) binding site. Gln255 provides a ligand contact to substrate. Residue Asp283 participates in Mg(2+) binding. 327–329 contacts substrate; sequence ESQ. Residues Asn513 and Gly550 each contribute to the ATP site. Asn551 lines the Mg(2+) pocket. A substrate-binding site is contributed by Ser553.

This sequence belongs to the FGAMS family. As to quaternary structure, monomer. Part of the FGAM synthase complex composed of 1 PurL, 1 PurQ and 2 PurS subunits.

It localises to the cytoplasm. It carries out the reaction N(2)-formyl-N(1)-(5-phospho-beta-D-ribosyl)glycinamide + L-glutamine + ATP + H2O = 2-formamido-N(1)-(5-O-phospho-beta-D-ribosyl)acetamidine + L-glutamate + ADP + phosphate + H(+). It participates in purine metabolism; IMP biosynthesis via de novo pathway; 5-amino-1-(5-phospho-D-ribosyl)imidazole from N(2)-formyl-N(1)-(5-phospho-D-ribosyl)glycinamide: step 1/2. Part of the phosphoribosylformylglycinamidine synthase complex involved in the purines biosynthetic pathway. Catalyzes the ATP-dependent conversion of formylglycinamide ribonucleotide (FGAR) and glutamine to yield formylglycinamidine ribonucleotide (FGAM) and glutamate. The FGAM synthase complex is composed of three subunits. PurQ produces an ammonia molecule by converting glutamine to glutamate. PurL transfers the ammonia molecule to FGAR to form FGAM in an ATP-dependent manner. PurS interacts with PurQ and PurL and is thought to assist in the transfer of the ammonia molecule from PurQ to PurL. In Corynebacterium glutamicum (strain ATCC 13032 / DSM 20300 / JCM 1318 / BCRC 11384 / CCUG 27702 / LMG 3730 / NBRC 12168 / NCIMB 10025 / NRRL B-2784 / 534), this protein is Phosphoribosylformylglycinamidine synthase subunit PurL.